Here is a 424-residue protein sequence, read N- to C-terminus: Enolase (424 aa).

Glutamine 162 is a (2R)-2-phosphoglycerate binding site. Glutamate 204 (proton donor) is an active-site residue. Aspartate 241, glutamate 284, and aspartate 311 together coordinate Mg(2+). Positions 336, 365, 366, and 387 each coordinate (2R)-2-phosphoglycerate. Lysine 336 (proton acceptor) is an active-site residue.

It belongs to the enolase family. Requires Mg(2+) as cofactor.

The protein resides in the cytoplasm. The protein localises to the secreted. It is found in the cell surface. The enzyme catalyses (2R)-2-phosphoglycerate = phosphoenolpyruvate + H2O. It functions in the pathway carbohydrate degradation; glycolysis; pyruvate from D-glyceraldehyde 3-phosphate: step 4/5. Functionally, catalyzes the reversible conversion of 2-phosphoglycerate (2-PG) into phosphoenolpyruvate (PEP). It is essential for the degradation of carbohydrates via glycolysis. The chain is Enolase from Mesorhizobium japonicum (strain LMG 29417 / CECT 9101 / MAFF 303099) (Mesorhizobium loti (strain MAFF 303099)).